A 92-amino-acid chain; its full sequence is Cell division topological specificity factor (92 aa).

It belongs to the MinE family.

Functionally, prevents the cell division inhibition by proteins MinC and MinD at internal division sites while permitting inhibition at polar sites. This ensures cell division at the proper site by restricting the formation of a division septum at the midpoint of the long axis of the cell. The polypeptide is Cell division topological specificity factor (Desulforamulus reducens (strain ATCC BAA-1160 / DSM 100696 / MI-1) (Desulfotomaculum reducens)).